The primary structure comprises 564 residues: Dihydropyrimidinase-related protein 5 (564 aa).

Phosphothreonine is present on residues Thr-509 and Thr-514. Ser-532 and Ser-538 each carry phosphoserine. Arg-559 is subject to Omega-N-methylarginine.

The protein belongs to the metallo-dependent hydrolases superfamily. Hydantoinase/dihydropyrimidinase family. Homotetramer, and heterotetramer with other DPYS-like proteins. Interacts with DPYSL2, DPYSL3 and DPYSL4. Interacts with MAP2 and TUBB3. Highly expressed in embryonic and early postnatal brain and spinal cord.

The protein resides in the cytoplasm. Its function is as follows. Involved in the negative regulation of dendrite outgrowth. The protein is Dihydropyrimidinase-related protein 5 (Dpysl5) of Rattus norvegicus (Rat).